The following is a 323-amino-acid chain: Quinolinate synthase (323 aa).

The iminosuccinate site is built by His38 and Ser55. Cys100 is a binding site for [4Fe-4S] cluster. Iminosuccinate contacts are provided by residues 126–128 (YIN) and Ser143. Cys186 contributes to the [4Fe-4S] cluster binding site. Residues 212-214 (HPE) and Thr229 each bind iminosuccinate. Cys279 contributes to the [4Fe-4S] cluster binding site.

It belongs to the quinolinate synthase family. Type 2 subfamily. [4Fe-4S] cluster serves as cofactor.

It localises to the cytoplasm. It carries out the reaction iminosuccinate + dihydroxyacetone phosphate = quinolinate + phosphate + 2 H2O + H(+). It participates in cofactor biosynthesis; NAD(+) biosynthesis; quinolinate from iminoaspartate: step 1/1. Catalyzes the condensation of iminoaspartate with dihydroxyacetone phosphate to form quinolinate. The chain is Quinolinate synthase from Gloeothece citriformis (strain PCC 7424) (Cyanothece sp. (strain PCC 7424)).